Here is a 257-residue protein sequence, read N- to C-terminus: Ribonuclease HII (257 aa).

One can recognise an RNase H type-2 domain in the interval 72–257; sequence TYIAGIDEVG…FAPIKDMIQK (186 aa). The a divalent metal cation site is built by Asp78, Glu79, and Asp170.

This sequence belongs to the RNase HII family. Mn(2+) serves as cofactor. The cofactor is Mg(2+).

It localises to the cytoplasm. It carries out the reaction Endonucleolytic cleavage to 5'-phosphomonoester.. Functionally, endonuclease that specifically degrades the RNA of RNA-DNA hybrids. The polypeptide is Ribonuclease HII (Bacillus cereus (strain B4264)).